A 207-amino-acid chain; its full sequence is A-type ATP synthase subunit E (207 aa).

The protein belongs to the V-ATPase E subunit family. Has multiple subunits with at least A(3), B(3), C, D, E, F, H, I and proteolipid K(x).

The protein resides in the cell membrane. Its function is as follows. Component of the A-type ATP synthase that produces ATP from ADP in the presence of a proton gradient across the membrane. The chain is A-type ATP synthase subunit E from Methanosphaera stadtmanae (strain ATCC 43021 / DSM 3091 / JCM 11832 / MCB-3).